The sequence spans 207 residues: NADH-ubiquinone oxidoreductase chain 6 (207 aa).

Helical transmembrane passes span Ile15 to Ser35, Ser40 to Ile60, Leu66 to Phe86, Leu116 to Tyr136, and Ile184 to Thr204.

It belongs to the complex I subunit 6 family.

The protein resides in the mitochondrion membrane. The enzyme catalyses a ubiquinone + NADH + 5 H(+)(in) = a ubiquinol + NAD(+) + 4 H(+)(out). Core subunit of the mitochondrial membrane respiratory chain NADH dehydrogenase (Complex I) that is believed to belong to the minimal assembly required for catalysis. Complex I functions in the transfer of electrons from NADH to the respiratory chain. The immediate electron acceptor for the enzyme is believed to be ubiquinone. The chain is NADH-ubiquinone oxidoreductase chain 6 (ND6) from Wickerhamomyces canadensis (Yeast).